Consider the following 240-residue polypeptide: Insulin-like growth factor-binding protein 6 (240 aa).

An N-terminal signal peptide occupies residues 1 to 27 (MTPHRLLPPLLLLLALLLAASPGGALA). The 80-residue stretch at 28-107 (RCPGCGQGVQ…LLGRGRCLPA (80 aa)) folds into the IGFBP N-terminal domain. 5 disulfides stabilise this stretch: Cys-29–Cys-32, Cys-40–Cys-44, Cys-57–Cys-63, Cys-71–Cys-84, and Cys-78–Cys-104. The interval 109–160 (APAVAEENPKESKPQAGTARPQDVNRRDQQRNPGTSTTPSQPNSAGVQDTEM) is disordered. A glycan (O-linked (HexNAc...) threonine) is linked at Thr-126. Residues 139–155 (RNPGTSTTPSQPNSAGV) are compositionally biased toward polar residues. O-linked (HexNAc...) serine glycosylation occurs at Ser-144. 2 O-linked (HexNAc...) threonine glycosylation sites follow: Thr-145 and Thr-146. The O-linked (HexNAc...) serine glycan is linked to Ser-152. A Thyroglobulin type-1 domain is found at 160–234 (MGPCRRHLDS…SPDGNGSSSC (75 aa)). Intrachain disulfides connect Cys-163-Cys-190, Cys-201-Cys-212, and Cys-214-Cys-234. The segment at 217 to 240 (RMGKSLPGSPDGNGSSSCPTGSSG) is disordered. A compositionally biased stretch (polar residues) spans 228-240 (GNGSSSCPTGSSG).

In terms of assembly, interacts (via C-terminal domain) with PHB2. Post-translationally, O-linked glycans consist of hexose (probably Gal), N-acetylhexosamine (probably GalNAc) and sialic acid residues. O-glycosylated with core 1 or possibly core 8 glycans. O-glycosylated on one site only in the region AA 143-168 in cerebrospinal fluid.

It is found in the secreted. Functionally, IGF-binding proteins prolong the half-life of the IGFs and have been shown to either inhibit or stimulate the growth promoting effects of the IGFs on cell culture. They alter the interaction of IGFs with their cell surface receptors. Activates the MAPK signaling pathway and induces cell migration. This is Insulin-like growth factor-binding protein 6 from Homo sapiens (Human).